A 319-amino-acid polypeptide reads, in one-letter code: Cobalamin biosynthesis protein CbiB (319 aa).

A run of 5 helical transmembrane segments spans residues 56 to 76 (VMWV…LALA), 82 to 102 (WFGW…RSLA), 153 to 173 (VDGI…LAMA), 204 to 224 (VANY…AGLC), and 296 to 316 (LMWV…CGLS).

Belongs to the CobD/CbiB family.

The protein resides in the cell membrane. The protein operates within cofactor biosynthesis; adenosylcobalamin biosynthesis. Functionally, converts cobyric acid to cobinamide by the addition of aminopropanol on the F carboxylic group. However, the true cosubstrate could be (R)-1-amino-2-propanol O-2-phosphate, leading to cobinamide phosphate. This is Cobalamin biosynthesis protein CbiB from Salmonella choleraesuis (strain SC-B67).